Here is a 113-residue protein sequence, read N- to C-terminus: UPF0212 protein MmarC6_1165 (113 aa).

It belongs to the UPF0212 family.

The chain is UPF0212 protein MmarC6_1165 from Methanococcus maripaludis (strain C6 / ATCC BAA-1332).